A 428-amino-acid chain; its full sequence is Histidine--tRNA ligase (428 aa).

The protein belongs to the class-II aminoacyl-tRNA synthetase family.

The protein resides in the cytoplasm. It carries out the reaction tRNA(His) + L-histidine + ATP = L-histidyl-tRNA(His) + AMP + diphosphate + H(+). This Sulfolobus acidocaldarius (strain ATCC 33909 / DSM 639 / JCM 8929 / NBRC 15157 / NCIMB 11770) protein is Histidine--tRNA ligase.